Reading from the N-terminus, the 757-residue chain is MDVNPTLLFLKVPAQNAISTTFPYTGDPPYSHGTGTGYTMDTVNRTHQYSEKGKWTTNTETGAPQLNPIDGPLPEDNEPSGYAQTDCVLEAMAFLEESHPGIFENSCLETIEVVQQTRVDKLTQGRQTYDWTLNRNQPAATALANTIEVFRSNGLTANESGRLIDFLKDVMESMDKEEIEITTHFQRKRRVRDNMTKKMVTQRTIGKKKQRVNKRSYLIRALTLNTMTKDAERGKLKRRAIATPGMQIRGFVYFVETLARSICEKLEQSGLPVGGNEKKAKLANVVRKMMTNSQDTELSFTITGDNTKWNENQNPRMFLAMITYITKNQPEWFRNILSIAPIMFSNKMARLGKGYMFESKRMKLRTQIPAEMLASIDLKYFNESTRKKIEKIRPLLIDGTASLSPGMMMGMFNMLSTVLGVSILNLGQKKYTKTTYWWDGLQSSDDFALIVNAPNHEGIQAGVDRFYRTCKLVGINMSKKKSYINKTGTFEFTSFFYRYGFVANFSMELPSFGVSGINESADMSIGVTVIKNNMINNDLGPATAQMALQLFIKDYRYTYRCHRGDTQIQTRRSFELKKLWDQTQSKAGLLVSDGGPNLYNIRNLHIPEVCLKWELMDEDYQGRLCNPLNPFVSHKEIESVNNAVVMPAHGPAKSMEYDAVATTHSWIPKRNRSILNTSQRGILEDEQMYQKCCNLFEKFFPSSSYRRPVGISSMVEAMVSRARIDARIDFESGRIKKEEFSEIMKICSTIEELRRQK.

The segment at 50 to 82 (SEKGKWTTNTETGAPQLNPIDGPLPEDNEPSGY) is disordered. The segment covering 55-64 (WTTNTETGAP) has biased composition (polar residues). 2 short sequence motifs (nuclear localization signal) span residues 187 to 195 (RKRRVRDNM) and 203 to 216 (RTIG…NKRS). The promoter-binding site stretch occupies residues 249-256 (RGFVYFVE). The RdRp catalytic domain occupies 286-483 (VRKMMTNSQD…GINMSKKKSY (198 aa)).

This sequence belongs to the influenza viruses polymerase PB1 family. Influenza RNA polymerase is composed of three subunits: PB1, PB2 and PA. Interacts (via N-terminus) with PA (via C-terminus). Interacts (via C-terminus) with PB2 (via N-terminus); this interaction is essential for transcription initiation. Post-translationally, phosphorylated by host PRKCA.

Its subcellular location is the host nucleus. It localises to the host cytoplasm. The catalysed reaction is RNA(n) + a ribonucleoside 5'-triphosphate = RNA(n+1) + diphosphate. In terms of biological role, RNA-dependent RNA polymerase which is responsible for replication and transcription of virus RNA segments. The transcription of viral mRNAs occurs by a unique mechanism called cap-snatching. 5' methylated caps of cellular mRNAs are cleaved after 10-13 nucleotides by PA. In turn, these short capped RNAs are used as primers by PB1 for transcription of viral mRNAs. During virus replication, PB1 initiates RNA synthesis and copy vRNA into complementary RNA (cRNA) which in turn serves as a template for the production of more vRNAs. The sequence is that of RNA-directed RNA polymerase catalytic subunit from Aves (whales).